A 563-amino-acid polypeptide reads, in one-letter code: MTDEGDLAQEDTAKDEGNVTEGSRMSKLRRARRKVTKPHLCSMDGEEIAKANSSEMSRNQIADLSKPGSAESWSSHSAKDAYHPTPVVKPSLPSALAGAPDAEFSPNTDPTRYNAQSFNPPQLSARMKHIKQEMAKNHLQFVRFEATDLHGVSRSKSIPAQFFQEKVIHGVFMPRGYLELMPNPKDNEVNHIRATCFNSDIVLMPELSTFRVLPWAERTARVICDTFTVTGEPLLTSPRYIAKRQLRQLQDAGFCLLSAFIYDFCIFGVPEVINSKTISFPASTLLSNHDQPFMQELVEGLYQTGANVESFSSSTRPGQMEICFLPEFGISSADNAFTLRTGLQEVARRYNYIASLVIETGFCNSGILSHSIWDVGGKTNMFCSGSGVERLTLTGKKWLAGLLKHSAALSCLMAPAVNCRKRYCKDSRDLKDSVPTTWGYNDNSCALNIKCHGEKGTQIENKLGSATANPYLVLAATVAAGLDGLQSSDGAAAGSDESQDLYQPEPSEIPLKMEDALAALEQDECLKQALGETFIRYFVAMKKYELENEETDAEGNKFLEYFI.

The tract at residues 1–115 is disordered; it reads MTDEGDLAQE…PNTDPTRYNA (115 aa). Residues 26 to 37 show a composition bias toward basic residues; it reads SKLRRARRKVTK. Polar residues-rich tracts occupy residues 51 to 62 and 105 to 115; these read ANSSEMSRNQIA and SPNTDPTRYNA. The GS beta-grasp domain maps to 137 to 231; it reads NHLQFVRFEA…VICDTFTVTG (95 aa). The 326-residue stretch at 238 to 563 folds into the GS catalytic domain; sequence PRYIAKRQLR…EGNKFLEYFI (326 aa).

Belongs to the glutamine synthetase family. In terms of assembly, dodecamer. Interacts with BFSP2 and VIM. In terms of tissue distribution, expressed in lens.

May act as a component of the cytoskeleton or as a chaperone for the reorganization of intermediate filament proteins during terminal differentiation in the lens. Does not seem to have enzymatic activity. This is Lengsin (Lgsn) from Mus musculus (Mouse).